The chain runs to 289 residues: Probable WRKY transcription factor 38 (289 aa).

The disordered stretch occupies residues 62–103 (PETEDDQFSDLSSRDSSPPPQGSPSKKRKIDSTNSSENWRDD). Residues 104-172 (SPDPIYYDGY…YFGHHTCKTE (69 aa)) constitute a DNA-binding region (WRKY). Low complexity predominate over residues 249 to 266 (LSSPSGSYPPSSSSGSES). Residues 249–278 (LSSPSGSYPPSSSSGSESADFNSDLLFDNP) are disordered.

It belongs to the WRKY group III family.

It is found in the nucleus. In terms of biological role, transcription factor. Interacts specifically with the W box (5'-(T)TGAC[CT]-3'), a frequently occurring elicitor-responsive cis-acting element. The polypeptide is Probable WRKY transcription factor 38 (WRKY38) (Arabidopsis thaliana (Mouse-ear cress)).